The primary structure comprises 677 residues: Methionine--tRNA ligase (677 aa).

The short motif at 15–25 (PYANGSIHLGH) is the 'HIGH' region element. Residues C146, C149, C159, and C162 each contribute to the Zn(2+) site. Positions 333–337 (KMSKS) match the 'KMSKS' region motif. Residue K336 participates in ATP binding. Residues 575 to 677 (DFAKIDLRVA…DGAKPGQQVK (103 aa)) form the tRNA-binding domain.

This sequence belongs to the class-I aminoacyl-tRNA synthetase family. MetG type 1 subfamily. As to quaternary structure, homodimer. It depends on Zn(2+) as a cofactor.

It is found in the cytoplasm. It catalyses the reaction tRNA(Met) + L-methionine + ATP = L-methionyl-tRNA(Met) + AMP + diphosphate. Is required not only for elongation of protein synthesis but also for the initiation of all mRNA translation through initiator tRNA(fMet) aminoacylation. This Salmonella typhimurium (strain LT2 / SGSC1412 / ATCC 700720) protein is Methionine--tRNA ligase.